Reading from the N-terminus, the 133-residue chain is Triatox (133 aa).

Positions 1–22 (MTTLRVLLAVCCAAYCILAEDV) are cleaved as a signal peptide. The CUB domain maps to 23-125 (TVPANGELKL…RAMCTVYSAE (103 aa)). Cys-70 and Cys-86 form a disulfide bridge.

The protein belongs to the venom CUB family. In terms of tissue distribution, expressed by the venom gland.

The protein localises to the secreted. In terms of biological role, may function as an antimicrobial peptide and may be related to the innate defense of the insect in the salivary glands. In Triatoma infestans (Assassin bug), this protein is Triatox.